The primary structure comprises 218 residues: Pyridoxine/pyridoxamine 5'-phosphate oxidase (218 aa).

Substrate-binding positions include 14 to 17 (RREY) and Lys-72. FMN-binding positions include 67 to 72 (RIVLLK), 82 to 83 (YT), Arg-88, Lys-89, and Gln-111. Residues Tyr-129, Arg-133, and Ser-137 each coordinate substrate. FMN contacts are provided by residues 146-147 (QS) and Trp-191. 197–199 (RLH) contacts substrate. Arg-201 contributes to the FMN binding site.

The protein belongs to the pyridoxamine 5'-phosphate oxidase family. As to quaternary structure, homodimer. Requires FMN as cofactor.

It carries out the reaction pyridoxamine 5'-phosphate + O2 + H2O = pyridoxal 5'-phosphate + H2O2 + NH4(+). The enzyme catalyses pyridoxine 5'-phosphate + O2 = pyridoxal 5'-phosphate + H2O2. It functions in the pathway cofactor metabolism; pyridoxal 5'-phosphate salvage; pyridoxal 5'-phosphate from pyridoxamine 5'-phosphate: step 1/1. Its pathway is cofactor metabolism; pyridoxal 5'-phosphate salvage; pyridoxal 5'-phosphate from pyridoxine 5'-phosphate: step 1/1. Functionally, catalyzes the oxidation of either pyridoxine 5'-phosphate (PNP) or pyridoxamine 5'-phosphate (PMP) into pyridoxal 5'-phosphate (PLP). The chain is Pyridoxine/pyridoxamine 5'-phosphate oxidase from Escherichia fergusonii (strain ATCC 35469 / DSM 13698 / CCUG 18766 / IAM 14443 / JCM 21226 / LMG 7866 / NBRC 102419 / NCTC 12128 / CDC 0568-73).